Here is a 307-residue protein sequence, read N- to C-terminus: Ribonuclease Z (307 aa).

Residues H63, H65, D67, H68, H143, D213, and H271 each contribute to the Zn(2+) site. D67 (proton acceptor) is an active-site residue.

Belongs to the RNase Z family. As to quaternary structure, homodimer. Requires Zn(2+) as cofactor.

The catalysed reaction is Endonucleolytic cleavage of RNA, removing extra 3' nucleotides from tRNA precursor, generating 3' termini of tRNAs. A 3'-hydroxy group is left at the tRNA terminus and a 5'-phosphoryl group is left at the trailer molecule.. Its function is as follows. Zinc phosphodiesterase, which displays some tRNA 3'-processing endonuclease activity. Probably involved in tRNA maturation, by removing a 3'-trailer from precursor tRNA. This chain is Ribonuclease Z, found in Lactococcus lactis subsp. cremoris (strain SK11).